The chain runs to 266 residues: Ribonuclease HII (266 aa).

The RNase H type-2 domain occupies S73–G266. A divalent metal cation contacts are provided by D79, E80, and D173.

This sequence belongs to the RNase HII family. Mn(2+) serves as cofactor. Mg(2+) is required as a cofactor.

It localises to the cytoplasm. It carries out the reaction Endonucleolytic cleavage to 5'-phosphomonoester.. Endonuclease that specifically degrades the RNA of RNA-DNA hybrids. This Pelotomaculum thermopropionicum (strain DSM 13744 / JCM 10971 / SI) protein is Ribonuclease HII.